The following is a 157-amino-acid chain: Transcription elongation factor GreA (157 aa).

Residues glutamate 47 to alanine 75 adopt a coiled-coil conformation.

The protein belongs to the GreA/GreB family.

Its function is as follows. Necessary for efficient RNA polymerase transcription elongation past template-encoded arresting sites. The arresting sites in DNA have the property of trapping a certain fraction of elongating RNA polymerases that pass through, resulting in locked ternary complexes. Cleavage of the nascent transcript by cleavage factors such as GreA or GreB allows the resumption of elongation from the new 3'terminus. GreA releases sequences of 2 to 3 nucleotides. In Mycoplasmopsis pulmonis (strain UAB CTIP) (Mycoplasma pulmonis), this protein is Transcription elongation factor GreA.